The sequence spans 462 residues: Cysteine--tRNA ligase (462 aa).

C29 contacts Zn(2+). The 'HIGH' region signature appears at 31 to 41 (PTVYNHAHIGN). Residues C211, H236, and E240 each contribute to the Zn(2+) site. The 'KMSKS' region motif lies at 269–273 (KMSKS). K272 contacts ATP.

This sequence belongs to the class-I aminoacyl-tRNA synthetase family. In terms of assembly, monomer. It depends on Zn(2+) as a cofactor.

The protein localises to the cytoplasm. The catalysed reaction is tRNA(Cys) + L-cysteine + ATP = L-cysteinyl-tRNA(Cys) + AMP + diphosphate. This Caulobacter sp. (strain K31) protein is Cysteine--tRNA ligase.